Reading from the N-terminus, the 1061-residue chain is Carbamoyl phosphate synthase large chain (1061 aa).

The carboxyphosphate synthetic domain stretch occupies residues 1–401 (MPKRTDVHKI…ALQKAVRSLE (401 aa)). The ATP site is built by R129, R169, G175, G176, K208, I210, E215, G241, I242, H243, Q284, and E298. The 195-residue stretch at 133–327 (KDLMQELNEP…IAKLAAKIAV (195 aa)) folds into the ATP-grasp 1 domain. Positions 284, 298, and 300 each coordinate Mg(2+). The Mn(2+) site is built by Q284, E298, and N300. Positions 402 to 546 (IDEKDLISAK…YSSYDLENES (145 aa)) are oligomerization domain. A carbamoyl phosphate synthetic domain region spans residues 547 to 929 (KKSDKKSVLV…ALYKAFTGAK (383 aa)). The 191-residue stretch at 671 to 861 (DQTIKNLGLK…MAQVATRVIL (191 aa)) folds into the ATP-grasp 2 domain. ATP-binding residues include R707, A746, L748, E752, G777, V778, H779, S780, Q820, and E832. Mg(2+)-binding residues include Q820, E832, and N834. Residues Q820, E832, and N834 each contribute to the Mn(2+) site. In terms of domain architecture, MGS-like spans 930-1061 (MELPDNGNVL…ENRSFATNSL (132 aa)). The interval 930–1061 (MELPDNGNVL…ENRSFATNSL (132 aa)) is allosteric domain.

The protein belongs to the CarB family. In terms of assembly, composed of two chains; the small (or glutamine) chain promotes the hydrolysis of glutamine to ammonia, which is used by the large (or ammonia) chain to synthesize carbamoyl phosphate. Tetramer of heterodimers (alpha,beta)4. Mg(2+) serves as cofactor. Requires Mn(2+) as cofactor.

It carries out the reaction hydrogencarbonate + L-glutamine + 2 ATP + H2O = carbamoyl phosphate + L-glutamate + 2 ADP + phosphate + 2 H(+). The enzyme catalyses hydrogencarbonate + NH4(+) + 2 ATP = carbamoyl phosphate + 2 ADP + phosphate + 2 H(+). The protein operates within amino-acid biosynthesis; L-arginine biosynthesis; carbamoyl phosphate from bicarbonate: step 1/1. It functions in the pathway pyrimidine metabolism; UMP biosynthesis via de novo pathway; (S)-dihydroorotate from bicarbonate: step 1/3. Functionally, large subunit of the glutamine-dependent carbamoyl phosphate synthetase (CPSase). CPSase catalyzes the formation of carbamoyl phosphate from the ammonia moiety of glutamine, carbonate, and phosphate donated by ATP, constituting the first step of 2 biosynthetic pathways, one leading to arginine and/or urea and the other to pyrimidine nucleotides. The large subunit (synthetase) binds the substrates ammonia (free or transferred from glutamine from the small subunit), hydrogencarbonate and ATP and carries out an ATP-coupled ligase reaction, activating hydrogencarbonate by forming carboxy phosphate which reacts with ammonia to form carbamoyl phosphate. This is Carbamoyl phosphate synthase large chain from Ligilactobacillus salivarius (strain UCC118) (Lactobacillus salivarius).